The chain runs to 124 residues: Large ribosomal subunit protein bL21 (124 aa).

A disordered region spans residues 105–124 (TVKAEPKSKRAPAPEAAADA). A compositionally biased stretch (low complexity) spans 115 to 124 (APAPEAAADA).

It belongs to the bacterial ribosomal protein bL21 family. As to quaternary structure, part of the 50S ribosomal subunit. Contacts protein L20.

Its function is as follows. This protein binds to 23S rRNA in the presence of protein L20. In Xanthobacter autotrophicus (strain ATCC BAA-1158 / Py2), this protein is Large ribosomal subunit protein bL21.